The chain runs to 252 residues: MLEIKSIPAFNDNYIWLIQNSDQRCAVVDPGDAKPVLHYIEQHQLTLEAILITHHHNDHIGGVADLVRAFPNVNVVGPKAEPIPTLTHPVEDGDRLELFDETFLVLGLGGHTLGHIGYVGDGKLFCGDVLFSAGCGRIFEGTAQQMFDSLNKLLALPEETEVFCAHEYTASNVAFALAVEPDNELLHQYRDTVNRLRAQNLPTIPTTLRQEKWINPFLRYLQPSVIHSVSSRTKNSDPLSVFTALREWKNEF.

Residues histidine 54, histidine 56, aspartate 58, histidine 59, histidine 111, aspartate 128, and histidine 166 each contribute to the Zn(2+) site.

It belongs to the metallo-beta-lactamase superfamily. Glyoxalase II family. As to quaternary structure, monomer. Zn(2+) serves as cofactor.

The enzyme catalyses an S-(2-hydroxyacyl)glutathione + H2O = a 2-hydroxy carboxylate + glutathione + H(+). It participates in secondary metabolite metabolism; methylglyoxal degradation; (R)-lactate from methylglyoxal: step 2/2. Functionally, thiolesterase that catalyzes the hydrolysis of S-D-lactoyl-glutathione to form glutathione and D-lactic acid. In Vibrio vulnificus (strain CMCP6), this protein is Hydroxyacylglutathione hydrolase.